The chain runs to 186 residues: Large ribosomal subunit protein uL5 (186 aa).

The protein belongs to the universal ribosomal protein uL5 family. As to quaternary structure, part of the 50S ribosomal subunit; part of the 5S rRNA/L5/L18/L25 subcomplex. Contacts the 5S rRNA and the P site tRNA. Forms a bridge to the 30S subunit in the 70S ribosome.

Its function is as follows. This is one of the proteins that bind and probably mediate the attachment of the 5S RNA into the large ribosomal subunit, where it forms part of the central protuberance. In the 70S ribosome it contacts protein S13 of the 30S subunit (bridge B1b), connecting the 2 subunits; this bridge is implicated in subunit movement. Contacts the P site tRNA; the 5S rRNA and some of its associated proteins might help stabilize positioning of ribosome-bound tRNAs. This chain is Large ribosomal subunit protein uL5, found in Porphyromonas gingivalis (strain ATCC 33277 / DSM 20709 / CIP 103683 / JCM 12257 / NCTC 11834 / 2561).